The primary structure comprises 327 residues: MSQARPATVLGAMEMGRRMDVTSSSASVRAFLQRGHTEIDTAFVYANGQSETILGDLGLGLGRSGCKVKIATKAAPMFGKTLKPADVRFQLETSLKRLQCPRVDLFYLHFPDHGTPIEETLQACHQLHQEGKFVELGLSNYVSWEVAEICTLCKKNGWIMPTVYQGMYNAITRQVETELFPCLRHFGLRFYAFNPLAGGLLTGRYKYQDKDGKNPESRFFGNPFSQLYMDRYWKEEHFNGIALVEKALKTTYGPTAPSMISAAVRWMYHHSQLKGTQGDAVILGMSSLEQLEQNLALVEEGPLEPAVVDAFDQAWNLVAHECPNYFR.

The residue at position 2 (S2) is a Phosphoserine. Residues M13, R18, and D40 each contribute to the NADP(+) site. The active-site Proton donor is Y45. Citrate is bound at residue H109. Residues N140, N194, L196, G198, R204, and R218 each contribute to the NADP(+) site. Citrate is bound by residues Y228 and R231. 5 residues coordinate NADP(+): S286, Q290, Q293, N294, and R327.

This sequence belongs to the aldo/keto reductase family. Aldo/keto reductase 2 subfamily. Homodimer. Heterodimer with AKR7A2.

It is found in the cytoplasm. The catalysed reaction is a primary alcohol + NADP(+) = an aldehyde + NADPH + H(+). The enzyme catalyses aflatoxin B1 dialdehyde + NADPH + H(+) = aflatoxin B1 C(6a)-monoaldehyde + NADP(+). It carries out the reaction aflatoxin B1 dialdehyde + NADPH + H(+) = aflatoxin B1 C(8)-monoaldehyde + NADP(+). It catalyses the reaction aflatoxin B1 C(6a)-monoaldehyde + NADPH + 2 H(+) = aflatoxin B1 triol + NADP(+). Its activity is regulated as follows. Inhibited by citrate. Functionally, catalyzes the NADPH-dependent reduction of various carbonyl-containing compounds, including aldehydes, ketones, and toxic products from cellular metabolism or environmental exposure. Can reduce the dialdehyde form of aflatoxin B1 (AFB1) into alcohol derivatives, via monoaldehydes intermediates, thus preventing the formation of protein adducts that contribute to AFB1-induced toxicity. This is Aldo-keto reductase family 7 member A3 from Rattus norvegicus (Rat).